We begin with the raw amino-acid sequence, 453 residues long: Tubulin beta-2 chain (453 aa).

GTP-binding residues include glutamine 11, glutamate 71, serine 140, glycine 144, threonine 145, glycine 146, asparagine 206, and asparagine 228. Glutamate 71 contributes to the Mg(2+) binding site.

Belongs to the tubulin family. Dimer of alpha and beta chains. A typical microtubule is a hollow water-filled tube with an outer diameter of 25 nm and an inner diameter of 15 nM. Alpha-beta heterodimers associate head-to-tail to form protofilaments running lengthwise along the microtubule wall with the beta-tubulin subunit facing the microtubule plus end conferring a structural polarity. Microtubules usually have 13 protofilaments but different protofilament numbers can be found in some organisms and specialized cells. Mg(2+) is required as a cofactor.

Its subcellular location is the cytoplasm. The protein resides in the cytoskeleton. Its function is as follows. Tubulin is the major constituent of microtubules, a cylinder consisting of laterally associated linear protofilaments composed of alpha- and beta-tubulin heterodimers. Microtubules grow by the addition of GTP-tubulin dimers to the microtubule end, where a stabilizing cap forms. Below the cap, tubulin dimers are in GDP-bound state, owing to GTPase activity of alpha-tubulin. The polypeptide is Tubulin beta-2 chain (Geotrichum candidum (Oospora lactis)).